A 187-amino-acid polypeptide reads, in one-letter code: Tetratricopeptide repeat protein 36 (187 aa).

3 TPR repeats span residues 47–80, 82–114, and 119–152; these read VKDL…LPQR, SAYN…SNGK, and CQAL…GSEF.

Belongs to the TTC36 family.

In Danio rerio (Zebrafish), this protein is Tetratricopeptide repeat protein 36 (ttc36).